A 254-amino-acid polypeptide reads, in one-letter code: MKIITCFKLVPEEQDIVVTPEYTLNFDNADAKISQFDLNAIEAASQLATDDDEIAALTVGGSLLQNSKVRKDVLSRGPHSLYLVQDAQLEHALPLDTAKALAAAIEKIGFDLLIFGEGSGDLYAQQVGLLVGEILQLPVINAVSAIQRQGNTLVIERTLEDDVEVIELSVPAVLCVTSDINVPRIPSMKAILGAGKKPVNQWQASDIDWSQSAPLAELVGIRVPPQTERKHIIIDNDSPEAIAELAEHLKKALN.

It belongs to the ETF beta-subunit/FixA family. As to quaternary structure, ydiR and YdiQ form a heterodimer.

May play a role in a redox process. The chain is Putative electron transfer flavoprotein subunit YdiQ (ydiQ) from Escherichia coli (strain K12).